The chain runs to 105 residues: Heat shock protein HspQ (105 aa).

The interval 74–105 is disordered; it reads SSELQDERPEQPSMDELAQTIRKQRQAPRLRN. The segment covering 95-105 has biased composition (basic residues); it reads RKQRQAPRLRN.

Belongs to the HspQ family.

Its subcellular location is the cytoplasm. Involved in the degradation of certain denaturated proteins, including DnaA, during heat shock stress. This chain is Heat shock protein HspQ, found in Shigella dysenteriae serotype 1 (strain Sd197).